The following is a 257-amino-acid chain: Protein TONNEAU 1b (257 aa).

The LisH domain maps to 73 to 105 (SGRLLSALICEYLDWAQLNHTLKVYQPECNSAK). Disordered regions lie at residues 148 to 216 (QVMG…EDMP) and 231 to 257 (LDRKTRNLTSSWRNVKDGTSEEEEGKD). The segment covering 187-199 (SVSASQASGAATS) has biased composition (low complexity). Basic and acidic residues-rich tracts occupy residues 201–212 (YRKDESNWRYDT) and 244–257 (NVKDGTSEEEEGKD).

As to quaternary structure, interacts with CEN1, LNG1/TRM2 and LNG2/TRM1 (via C-terminus).

It localises to the cytoplasm. It is found in the cytoskeleton. In terms of biological role, involved in the control of the dynamic organization of the cortical cytoskeleton. May play a role in the organization of microtubule arrays at the centrosome through interaction with centrin 1 (CEN1). This is Protein TONNEAU 1b (TON1B) from Arabidopsis thaliana (Mouse-ear cress).